Consider the following 55-residue polypeptide: Spermatid nuclear transition protein 1 (55 aa).

Basic residues predominate over residues 1–42 (MSTSRKLKTHGMRRGKNRAPHKGVKRGGSKRKYRKSSLKSRK). The disordered stretch occupies residues 1-55 (MSTSRKLKTHGMRRGKNRAPHKGVKRGGSKRKYRKSSLKSRKRGDDASRNYRSHL). Phosphoserine occurs at positions 36, 37, and 40.

This sequence belongs to the nuclear transition protein 1 family. In terms of tissue distribution, testis.

The protein resides in the nucleus. It localises to the chromosome. In terms of biological role, plays a key role in the replacement of histones to protamine in the elongating spermatids of mammals. In condensing spermatids, loaded onto the nucleosomes, where it promotes the recruitment and processing of protamines, which are responsible for histone eviction. This is Spermatid nuclear transition protein 1 (Tnp1) from Rattus norvegicus (Rat).